A 499-amino-acid chain; its full sequence is Glycerol kinase (499 aa).

ADP is bound at residue threonine 13. Threonine 13, threonine 14, and serine 15 together coordinate ATP. Residue threonine 13 coordinates sn-glycerol 3-phosphate. Arginine 17 lines the ADP pocket. The sn-glycerol 3-phosphate site is built by arginine 83, glutamate 84, tyrosine 135, and aspartate 245. Glycerol-binding residues include arginine 83, glutamate 84, tyrosine 135, aspartate 245, and glutamine 246. Residues threonine 267 and glycine 310 each coordinate ADP. ATP is bound by residues threonine 267, glycine 310, glutamine 314, and glycine 411. Positions 411 and 415 each coordinate ADP.

Belongs to the FGGY kinase family.

The catalysed reaction is glycerol + ATP = sn-glycerol 3-phosphate + ADP + H(+). Its pathway is polyol metabolism; glycerol degradation via glycerol kinase pathway; sn-glycerol 3-phosphate from glycerol: step 1/1. Its activity is regulated as follows. Inhibited by fructose 1,6-bisphosphate (FBP). Key enzyme in the regulation of glycerol uptake and metabolism. Catalyzes the phosphorylation of glycerol to yield sn-glycerol 3-phosphate. This Xanthomonas euvesicatoria pv. vesicatoria (strain 85-10) (Xanthomonas campestris pv. vesicatoria) protein is Glycerol kinase.